The sequence spans 465 residues: Ribulose bisphosphate carboxylase large chain (465 aa).

At K4 the chain carries N6,N6,N6-trimethyllysine. 2 residues coordinate substrate: N113 and T163. K165 (proton acceptor) is an active-site residue. A substrate-binding site is contributed by K167. The Mg(2+) site is built by K191, D193, and E194. K191 is modified (N6-carboxylysine). H284 serves as the catalytic Proton acceptor. Substrate-binding residues include R285, H317, and S369.

Belongs to the RuBisCO large chain family. Type I subfamily. As to quaternary structure, heterohexadecamer of 8 large chains and 8 small chains; disulfide-linked. The disulfide link is formed within the large subunit homodimers. It depends on Mg(2+) as a cofactor. The disulfide bond which can form in the large chain dimeric partners within the hexadecamer appears to be associated with oxidative stress and protein turnover.

Its subcellular location is the plastid. The protein resides in the chloroplast. It catalyses the reaction 2 (2R)-3-phosphoglycerate + 2 H(+) = D-ribulose 1,5-bisphosphate + CO2 + H2O. The catalysed reaction is D-ribulose 1,5-bisphosphate + O2 = 2-phosphoglycolate + (2R)-3-phosphoglycerate + 2 H(+). In terms of biological role, ruBisCO catalyzes two reactions: the carboxylation of D-ribulose 1,5-bisphosphate, the primary event in carbon dioxide fixation, as well as the oxidative fragmentation of the pentose substrate in the photorespiration process. Both reactions occur simultaneously and in competition at the same active site. The polypeptide is Ribulose bisphosphate carboxylase large chain (Fragaria ananassa (Strawberry)).